The primary structure comprises 222 residues: Nucleoside triphosphate pyrophosphatase (222 aa).

The active-site Proton acceptor is the Asp82.

Belongs to the Maf family. The cofactor is a divalent metal cation.

Its subcellular location is the cytoplasm. It catalyses the reaction a ribonucleoside 5'-triphosphate + H2O = a ribonucleoside 5'-phosphate + diphosphate + H(+). The catalysed reaction is a 2'-deoxyribonucleoside 5'-triphosphate + H2O = a 2'-deoxyribonucleoside 5'-phosphate + diphosphate + H(+). Its function is as follows. Nucleoside triphosphate pyrophosphatase. May have a dual role in cell division arrest and in preventing the incorporation of modified nucleotides into cellular nucleic acids. In Mycobacterium tuberculosis (strain ATCC 25177 / H37Ra), this protein is Nucleoside triphosphate pyrophosphatase.